The primary structure comprises 159 residues: MSDRIYLTRDGYNRLKEELHLLSTQTRKEVLEKIAEARSHGDLSENAEYDAAREEQSQLEAKIGDLENKLASATILDPKQIKTDRVYILTSVKLRNLDDEDEIIEYTLVSSEEADSDLGKISVRSPVGRALIGKSVGDKVTISVPKGELHYEILDIFVK.

A coiled-coil region spans residues 43–76 (LSENAEYDAAREEQSQLEAKIGDLENKLASATIL).

It belongs to the GreA/GreB family.

In terms of biological role, necessary for efficient RNA polymerase transcription elongation past template-encoded arresting sites. The arresting sites in DNA have the property of trapping a certain fraction of elongating RNA polymerases that pass through, resulting in locked ternary complexes. Cleavage of the nascent transcript by cleavage factors such as GreA or GreB allows the resumption of elongation from the new 3'terminus. GreA releases sequences of 2 to 3 nucleotides. This Chlorobaculum parvum (strain DSM 263 / NCIMB 8327) (Chlorobium vibrioforme subsp. thiosulfatophilum) protein is Transcription elongation factor GreA.